We begin with the raw amino-acid sequence, 103 residues long: Large ribosomal subunit protein bL21 (103 aa).

Belongs to the bacterial ribosomal protein bL21 family. As to quaternary structure, part of the 50S ribosomal subunit. Contacts protein L20.

Its function is as follows. This protein binds to 23S rRNA in the presence of protein L20. The protein is Large ribosomal subunit protein bL21 of Shewanella sediminis (strain HAW-EB3).